A 318-amino-acid chain; its full sequence is L-lactate dehydrogenase (318 aa).

NAD(+) contacts are provided by residues V18, D39, K44, Y69, and 83 to 84; that span reads GA. Residues Q86 and R92 each contribute to the substrate site. NAD(+) is bound by residues S105, 122-124, and S147; that span reads VSN. Substrate is bound at residue 124–127; that stretch reads NPVD. 152-155 is a substrate binding site; sequence DTSR. The active-site Proton acceptor is H179. Y225 is subject to Phosphotyrosine. Position 234 (T234) interacts with substrate.

It belongs to the LDH/MDH superfamily. LDH family. As to quaternary structure, homotetramer.

The protein localises to the cytoplasm. The catalysed reaction is (S)-lactate + NAD(+) = pyruvate + NADH + H(+). It functions in the pathway fermentation; pyruvate fermentation to lactate; (S)-lactate from pyruvate: step 1/1. Functionally, catalyzes the conversion of lactate to pyruvate. In Clostridium botulinum (strain Langeland / NCTC 10281 / Type F), this protein is L-lactate dehydrogenase.